The sequence spans 415 residues: Calreticulin (415 aa).

Positions Met-1–Ala-20 are cleaved as a signal peptide. N-linked (GlcNAc...) asparagine glycosylation occurs at Asn-52. Cys-106 and Cys-138 are joined by a disulfide. Residues Tyr-110, Lys-112, Tyr-129, and Asp-136 each coordinate an alpha-D-glucoside. N-linked (GlcNAc...) asparagine glycosylation is present at Asn-152. Repeat copies occupy residues Lys-192–Leu-203, Asp-211–Glu-222, Asp-228–Asp-239, Asp-246–Asp-257, Gly-261–Pro-271, Gly-275–Pro-285, and Gly-289–Pro-299. Residues Lys-192 to Asp-257 form a 4 X approximate repeats region. Residues Lys-208 to Glu-253 show a composition bias toward basic and acidic residues. Residues Lys-208–Pro-276 are disordered. Positions Gly-261–Pro-299 are 3 X approximate repeats. Glu-319 is an an alpha-D-glucoside binding site. The segment covering Glu-347–Pro-376 has biased composition (basic and acidic residues). Residues Glu-347–Leu-415 are disordered. 2 stretches are compositionally biased toward acidic residues: residues Ala-377–Gly-397 and Ala-404–Leu-415. Positions His-412–Leu-415 match the Prevents secretion from ER motif.

It belongs to the calreticulin family.

It is found in the endoplasmic reticulum lumen. Its function is as follows. Molecular calcium-binding chaperone promoting folding, oligomeric assembly and quality control in the ER via the calreticulin/calnexin cycle. This lectin may interact transiently with almost all of the monoglucosylated glycoproteins that are synthesized in the ER. This is Calreticulin from Ricinus communis (Castor bean).